We begin with the raw amino-acid sequence, 152 residues long: Succinate dehydrogenase [ubiquinone] cytochrome b small subunit B, mitochondrial (152 aa).

A mitochondrion-targeting transit peptide spans methionine 1–serine 21. The Mitochondrial matrix segment spans residues leucine 22–serine 56. Residues methionine 57–leucine 78 form a helical membrane-spanning segment. Residues tyrosine 79–alanine 83 lie on the Mitochondrial intermembrane side of the membrane. A helical transmembrane segment spans residues methionine 84–valine 104. Histidine 95 lines the heme b pocket. The Mitochondrial matrix portion of the chain corresponds to threonine 105 to lysine 113. Tyrosine 107 contacts a ubiquinone. A helical transmembrane segment spans residues isoleucine 114–phenylalanine 135. Over asparagine 136 to leucine 152 the chain is Mitochondrial intermembrane.

Belongs to the CybS family. As to quaternary structure, component of complex II composed of four subunits: the flavoprotein (FP) SDHA, iron-sulfur protein (IP) SDHB, and a cytochrome b560 composed of SDHC and SDHD.

It is found in the mitochondrion inner membrane. It participates in carbohydrate metabolism; tricarboxylic acid cycle. Membrane-anchoring subunit of succinate dehydrogenase (SDH) that is involved in complex II of the mitochondrial electron transport chain and is responsible for transferring electrons from succinate to ubiquinone (coenzyme Q). SDH also oxidizes malate to the non-canonical enol form of oxaloacetate, enol-oxaloacetate. Enol-oxaloacetate, which is a potent inhibitor of the succinate dehydrogenase activity, is further isomerized into keto-oxaloacetate. The protein is Succinate dehydrogenase [ubiquinone] cytochrome b small subunit B, mitochondrial (sdhd-b) of Xenopus laevis (African clawed frog).